Reading from the N-terminus, the 57-residue chain is uncharacterized protein (57 aa).

The helical transmembrane segment at 34–54 (AALLDAAALVVIPGLLTAAAV) threads the bilayer.

The protein resides in the membrane. This is an uncharacterized protein from Dictyostelium discoideum (Social amoeba).